We begin with the raw amino-acid sequence, 148 residues long: UPF0260 protein ESA_01462 (148 aa).

Belongs to the UPF0260 family.

In Cronobacter sakazakii (strain ATCC BAA-894) (Enterobacter sakazakii), this protein is UPF0260 protein ESA_01462.